Reading from the N-terminus, the 309-residue chain is Uracil phosphoribosyltransferase homolog (309 aa).

The disordered stretch occupies residues 1–38; the sequence is MATELQCPDSMPCHNQQVNSASTPSPEQLRPGDLILDH. The segment covering 13–26 has biased composition (polar residues); sequence CHNQQVNSASTPSP. Position 25 is a phosphoserine (S25). Residues R133, R142, and 176 to 179 each bind GTP; that span reads EKGN. R186 contributes to the 5-phospho-alpha-D-ribose 1-diphosphate binding site. R203 and R232 together coordinate GTP. 238–246 lines the 5-phospho-alpha-D-ribose 1-diphosphate pocket; the sequence is YPILSTGNT. A uracil-binding site is contributed by 299–301; it reads THF.

The protein belongs to the UPRTase family. In terms of tissue distribution, highly expressed in leukocytes, liver, spleen and thymus, with lower expression in brain, lung and skeletal muscle.

It localises to the cytoplasm. Its subcellular location is the nucleus. In Homo sapiens (Human), this protein is Uracil phosphoribosyltransferase homolog (UPRT).